Reading from the N-terminus, the 426-residue chain is MSMVHGSSFQIAQDGENENQGVQRVKKAGLTARGNVAVAKRSALGTITNQNIRVQPSRAAKSGNADCQDENVFAKQKSFGSSNNENKGFKIHVDEPTVQVLTTATLKTTRQSEDEDIKLNDQVTSLPSLQALEDIQVDNENGSPMVLDVTIEDAEKKPIDREAIILSVPEYAEDIYKHLREAESRHRSKPGYMKKQPDITNSMRSILVDWMVEVSEEYKLHRETLFLAINYIDRFLSQMSVLRGKLQLVGAASMFIASKYEEIYPPEVSEFVYITDDTYEQKQVLRMEHLILKVLSFDVAQPTINWFTDTYAKMADTDETTKSLSMYLSELTLVDADPYLKYLPSTIAAASLCLANITLGSEPWPSSLAKESKYEISEFSECLQEMYQTYLNAPNHPQQAIREKYKSSKYQQVSSISPPSSLSFTM.

Residues 1 to 11 (MSMVHGSSFQI) show a composition bias toward polar residues. The tract at residues 1 to 22 (MSMVHGSSFQIAQDGENENQGV) is disordered.

Belongs to the cyclin family. Cyclin AB subfamily.

Essential for the control of the cell cycle at the G2/M (mitosis) transition. Interacts with the CDC2 and CDK2 protein kinases to form MPF. G2/M cyclins accumulate steadily during G2 and are abruptly destroyed at mitosis. The protein is G2/mitotic-specific cyclin-A of Patella vulgata (Common limpet).